The primary structure comprises 236 residues: Small ribosomal subunit protein uS5 (236 aa).

The S5 DRBM domain occupies 61-124 (ENQEIIDIAL…NYAKLNIIEI (64 aa)).

This sequence belongs to the universal ribosomal protein uS5 family. As to quaternary structure, part of the 30S ribosomal subunit. Contacts protein S4.

With S4 and S12 plays an important role in translational accuracy. This is Small ribosomal subunit protein uS5 from Pyrococcus horikoshii (strain ATCC 700860 / DSM 12428 / JCM 9974 / NBRC 100139 / OT-3).